Consider the following 185-residue polypeptide: Large ribosomal subunit protein bL25 (185 aa).

It belongs to the bacterial ribosomal protein bL25 family. CTC subfamily. Part of the 50S ribosomal subunit; part of the 5S rRNA/L5/L18/L25 subcomplex. Contacts the 5S rRNA. Binds to the 5S rRNA independently of L5 and L18.

This is one of the proteins that binds to the 5S RNA in the ribosome where it forms part of the central protuberance. This Chlamydia caviae (strain ATCC VR-813 / DSM 19441 / 03DC25 / GPIC) (Chlamydophila caviae) protein is Large ribosomal subunit protein bL25.